The chain runs to 475 residues: Sulfate adenylyltransferase subunit 1 (475 aa).

Positions 25-239 constitute a tr-type G domain; it reads KSLLRFLTCG…EVLETVEIQR (215 aa). A G1 region spans residues 34-41; sequence GSVDDGKS. Position 34-41 (34-41) interacts with GTP; that stretch reads GSVDDGKS. The segment at 92–96 is G2; it reads GITID. The segment at 113–116 is G3; that stretch reads DTPG. GTP is bound by residues 113–117 and 168–171; these read DTPGH and NKMD. Residues 168–171 are G4; sequence NKMD. The interval 206–208 is G5; that stretch reads SAL.

The protein belongs to the TRAFAC class translation factor GTPase superfamily. Classic translation factor GTPase family. CysN/NodQ subfamily. As to quaternary structure, heterodimer composed of CysD, the smaller subunit, and CysN.

It catalyses the reaction sulfate + ATP + H(+) = adenosine 5'-phosphosulfate + diphosphate. It participates in sulfur metabolism; hydrogen sulfide biosynthesis; sulfite from sulfate: step 1/3. With CysD forms the ATP sulfurylase (ATPS) that catalyzes the adenylation of sulfate producing adenosine 5'-phosphosulfate (APS) and diphosphate, the first enzymatic step in sulfur assimilation pathway. APS synthesis involves the formation of a high-energy phosphoric-sulfuric acid anhydride bond driven by GTP hydrolysis by CysN coupled to ATP hydrolysis by CysD. In Escherichia coli (strain SE11), this protein is Sulfate adenylyltransferase subunit 1.